Here is a 125-residue protein sequence, read N- to C-terminus: Holo-[acyl-carrier-protein] synthase (125 aa).

Aspartate 8 and glutamate 57 together coordinate Mg(2+).

This sequence belongs to the P-Pant transferase superfamily. AcpS family. Mg(2+) serves as cofactor.

The protein resides in the cytoplasm. It carries out the reaction apo-[ACP] + CoA = holo-[ACP] + adenosine 3',5'-bisphosphate + H(+). In terms of biological role, transfers the 4'-phosphopantetheine moiety from coenzyme A to a Ser of acyl-carrier-protein. In Natranaerobius thermophilus (strain ATCC BAA-1301 / DSM 18059 / JW/NM-WN-LF), this protein is Holo-[acyl-carrier-protein] synthase.